The sequence spans 197 residues: Recombination protein RecR (197 aa).

A C4-type zinc finger spans residues 56–71 (CSRCFNLSAEDPCDIC). A Toprim domain is found at 79 to 174 (ETICVVAEPR…RVTRIAFGLP (96 aa)).

The protein belongs to the RecR family.

Functionally, may play a role in DNA repair. It seems to be involved in an RecBC-independent recombinational process of DNA repair. It may act with RecF and RecO. In Gloeobacter violaceus (strain ATCC 29082 / PCC 7421), this protein is Recombination protein RecR.